We begin with the raw amino-acid sequence, 365 residues long: Phospho-N-acetylmuramoyl-pentapeptide-transferase (365 aa).

The next 10 membrane-spanning stretches (helical) occupy residues 22 to 42 (YISVRIIMISITSLLITLALG), 74 to 94 (TMGGVLILSSVIISCLLWGDL), 95 to 115 (TSIYLWILILVVIFFGAIGFF), 133 to 153 (YKFALQSIFSIVLAIVLFYLL), 168 to 188 (SLYIPMGIVIFVVLAFFIING), 201 to 221 (GLAIVPVVLVAAGLGIYAYIE), 240 to 260 (LAEVAVFCAAVCGSGLAFLWF), 267 to 287 (VFMGDVGSLTLGAVLGVIAVM), 292 to 312 (LIFFIMGLLFVVEALSVMLQV), and 342 to 362 (KVVIRFWIISLILFLIGLAAI).

The protein belongs to the glycosyltransferase 4 family. MraY subfamily. Requires Mg(2+) as cofactor.

The protein localises to the cell inner membrane. The catalysed reaction is UDP-N-acetyl-alpha-D-muramoyl-L-alanyl-gamma-D-glutamyl-meso-2,6-diaminopimeloyl-D-alanyl-D-alanine + di-trans,octa-cis-undecaprenyl phosphate = di-trans,octa-cis-undecaprenyl diphospho-N-acetyl-alpha-D-muramoyl-L-alanyl-D-glutamyl-meso-2,6-diaminopimeloyl-D-alanyl-D-alanine + UMP. It participates in cell wall biogenesis; peptidoglycan biosynthesis. Functionally, catalyzes the initial step of the lipid cycle reactions in the biosynthesis of the cell wall peptidoglycan: transfers peptidoglycan precursor phospho-MurNAc-pentapeptide from UDP-MurNAc-pentapeptide onto the lipid carrier undecaprenyl phosphate, yielding undecaprenyl-pyrophosphoryl-MurNAc-pentapeptide, known as lipid I. This Francisella tularensis subsp. tularensis (strain WY96-3418) protein is Phospho-N-acetylmuramoyl-pentapeptide-transferase.